The sequence spans 197 residues: Nucleoside triphosphate pyrophosphatase (197 aa).

Catalysis depends on D70, which acts as the Proton acceptor.

It belongs to the Maf family. A divalent metal cation is required as a cofactor.

The protein resides in the cytoplasm. The catalysed reaction is a ribonucleoside 5'-triphosphate + H2O = a ribonucleoside 5'-phosphate + diphosphate + H(+). It carries out the reaction a 2'-deoxyribonucleoside 5'-triphosphate + H2O = a 2'-deoxyribonucleoside 5'-phosphate + diphosphate + H(+). Functionally, nucleoside triphosphate pyrophosphatase. May have a dual role in cell division arrest and in preventing the incorporation of modified nucleotides into cellular nucleic acids. In Shigella flexneri, this protein is Nucleoside triphosphate pyrophosphatase (yhdE).